The sequence spans 144 residues: Kunitz-type elastase inhibitor BrEI (144 aa).

Asn-38 carries N-linked (GlcNAc...) asparagine glycosylation. Cys-41 and Cys-88 are disulfide-bonded.

The protein belongs to the leguminous Kunitz-type inhibitor family.

In terms of biological role, inhibitor of porcine pancreatic elastase with a Ki of 27 nM. Does not inhibit human neutrophil elastase, bovine trypsin, human plasma kallikrein or porcine pancreatic kallikrein. The chain is Kunitz-type elastase inhibitor BrEI from Bauhinia rufa (Orchid tree).